The following is a 296-amino-acid chain: NAD kinase (296 aa).

Asp-72 (proton acceptor) is an active-site residue. Residues 72 to 73 (DG), 146 to 147 (ND), Arg-157, Lys-174, Asp-176, 187 to 192 (TAYALS), and Gln-247 each bind NAD(+).

Belongs to the NAD kinase family. It depends on a divalent metal cation as a cofactor.

The protein resides in the cytoplasm. It carries out the reaction NAD(+) + ATP = ADP + NADP(+) + H(+). In terms of biological role, involved in the regulation of the intracellular balance of NAD and NADP, and is a key enzyme in the biosynthesis of NADP. Catalyzes specifically the phosphorylation on 2'-hydroxyl of the adenosine moiety of NAD to yield NADP. In Pseudomonas putida (strain GB-1), this protein is NAD kinase.